Here is a 259-residue protein sequence, read N- to C-terminus: Beta-glucanase (259 aa).

An N-terminal signal peptide occupies residues 1–31 (MVKSKYLVFISVFSLLFGVFVVGFSHQGVKA). Residues 35–255 (RPMGTAFYES…WVRYTPLQNY (221 aa)) form the GH16 domain. Glu-142 serves as the catalytic Nucleophile. The Proton donor role is filled by Glu-146.

The protein belongs to the glycosyl hydrolase 16 family.

The enzyme catalyses Hydrolysis of (1-&gt;4)-beta-D-glucosidic linkages in beta-D-glucans containing (1-&gt;3)- and (1-&gt;4)-bonds.. In terms of biological role, hydrolyzes B-glucans containing mixed beta-1,3 and beta-1,4 linkages. The polypeptide is Beta-glucanase (bglBB) (Brevibacillus brevis (Bacillus brevis)).